Reading from the N-terminus, the 618-residue chain is Proline--tRNA ligase (618 aa).

This sequence belongs to the class-II aminoacyl-tRNA synthetase family. ProS type 1 subfamily. In terms of assembly, homodimer.

It localises to the cytoplasm. The catalysed reaction is tRNA(Pro) + L-proline + ATP = L-prolyl-tRNA(Pro) + AMP + diphosphate. Functionally, catalyzes the attachment of proline to tRNA(Pro) in a two-step reaction: proline is first activated by ATP to form Pro-AMP and then transferred to the acceptor end of tRNA(Pro). As ProRS can inadvertently accommodate and process non-cognate amino acids such as alanine and cysteine, to avoid such errors it has two additional distinct editing activities against alanine. One activity is designated as 'pretransfer' editing and involves the tRNA(Pro)-independent hydrolysis of activated Ala-AMP. The other activity is designated 'posttransfer' editing and involves deacylation of mischarged Ala-tRNA(Pro). The misacylated Cys-tRNA(Pro) is not edited by ProRS. The protein is Proline--tRNA ligase of Streptococcus pyogenes serotype M1.